Reading from the N-terminus, the 176-residue chain is DNA repair RAD52-like protein 1, mitochondrial (176 aa).

The N-terminal 37 residues, 1-37 (MAGLGLRLKAAKWTLRSGSGAVSREWSSEMGKGVRRF), are a transit peptide targeting the mitochondrion.

Belongs to the RAD52 family. In terms of assembly, interacts with WHY2. In terms of tissue distribution, expressed in root vascular tissue, tips of primary and secondary roots, young leaves, hydathodes, stomatal guard cells, cauline leaves, flower buds, stipules, carpels, pistils and anther filaments.

It is found in the mitochondrion. Its subcellular location is the nucleus. Functionally, plant-specific single-stranded DNA-binding protein required for efficient heterologous recombination-dependent DNA repair in nuclear and mitochondrial compartments. Forms large nucleo-protein complexes with WHY2 in mitochondria. Binds ssDNA with high affinity, but with little sequence specificity. Involved in double-stranded DNA break repair. Involved in the hydrolytic splicing pathway in mitochondrion. Facilitates the excision of two cis-spliced group II introns, NAD1 intron 2 and NAD2 intron 1. The polypeptide is DNA repair RAD52-like protein 1, mitochondrial (Arabidopsis thaliana (Mouse-ear cress)).